Here is a 116-residue protein sequence, read N- to C-terminus: Large ribosomal subunit protein uL18 (116 aa).

The protein belongs to the universal ribosomal protein uL18 family. Part of the 50S ribosomal subunit; part of the 5S rRNA/L5/L18/L25 subcomplex. Contacts the 5S and 23S rRNAs.

In terms of biological role, this is one of the proteins that bind and probably mediate the attachment of the 5S RNA into the large ribosomal subunit, where it forms part of the central protuberance. The polypeptide is Large ribosomal subunit protein uL18 (Shewanella woodyi (strain ATCC 51908 / MS32)).